An 859-amino-acid polypeptide reads, in one-letter code: Paladin (859 aa).

The interval 1–34 is disordered; it reads MGTTASTAQQTVSAGTSLEGLQGGSSSSMDSQHS. The N-myristoyl glycine moiety is linked to residue G2. S89 is subject to Phosphoserine.

The protein belongs to the paladin family. In terms of tissue distribution, vascular expression detected in the central nervous system, kidney, lung, heart, skeletal muscle, white adipose tissue (WAT), brown adipose tissue, liver, pancreas and spleen. Not expressed in all vessels: for instance, not expressed in capillaries in the brain, and expressed mainly in large vessels in the heart, WAT, liver, pancreas and kidney. Predominant nonvascular expression in myocardium and lung mesenchyme. In large vessels, primarily expressed by smooth muscle cells, but occasionally detected at low levels in the endothelium. Expressed in various cells of the hematopoietic lineage.

The protein resides in the cytoplasm. The protein localises to the cytosol. The sequence is that of Paladin (Pald1) from Mus musculus (Mouse).